We begin with the raw amino-acid sequence, 205 residues long: LexA repressor (205 aa).

Positions 28 to 48 (IRDIMKHFNFKSPRAAHKHLI) form a DNA-binding region, H-T-H motif. Catalysis depends on for autocatalytic cleavage activity residues serine 125 and lysine 163.

It belongs to the peptidase S24 family. As to quaternary structure, homodimer.

It carries out the reaction Hydrolysis of Ala-|-Gly bond in repressor LexA.. Represses a number of genes involved in the response to DNA damage (SOS response), including recA and lexA. In the presence of single-stranded DNA, RecA interacts with LexA causing an autocatalytic cleavage which disrupts the DNA-binding part of LexA, leading to derepression of the SOS regulon and eventually DNA repair. This chain is LexA repressor, found in Petrotoga mobilis (strain DSM 10674 / SJ95).